Reading from the N-terminus, the 219-residue chain is Transmembrane protein 179B (219 aa).

The next 4 helical transmembrane spans lie at 9-29 (VELLLFTAAFLCGALAAATLT), 65-85 (FVAGASGILALYCLLLLFFWV), 98-118 (IGLRIALAISATAIFLILVSA), and 162-182 (LHTAETSSWVNLILWCLALLL). S206 bears the Phosphoserine mark.

Belongs to the TMEM179 family.

Its subcellular location is the membrane. This is Transmembrane protein 179B (Tmem179b) from Mus musculus (Mouse).